We begin with the raw amino-acid sequence, 720 residues long: Methionine--tRNA ligase (720 aa).

The short motif at proline 27 to histidine 37 is the 'HIGH' region element. Positions 158, 161, 171, and 174 each coordinate Zn(2+). A 'KMSKS' region motif is present at residues lysine 348–serine 352. Lysine 351 serves as a coordination point for ATP. Residues aspartate 614–lysine 720 form the tRNA-binding domain.

This sequence belongs to the class-I aminoacyl-tRNA synthetase family. MetG type 1 subfamily. In terms of assembly, homodimer. Zn(2+) is required as a cofactor.

Its subcellular location is the cytoplasm. The enzyme catalyses tRNA(Met) + L-methionine + ATP = L-methionyl-tRNA(Met) + AMP + diphosphate. Its function is as follows. Is required not only for elongation of protein synthesis but also for the initiation of all mRNA translation through initiator tRNA(fMet) aminoacylation. This chain is Methionine--tRNA ligase, found in Burkholderia lata (strain ATCC 17760 / DSM 23089 / LMG 22485 / NCIMB 9086 / R18194 / 383).